Consider the following 336-residue polypeptide: NADH-quinone oxidoreductase subunit H (336 aa).

8 helical membrane-spanning segments follow: residues leucine 9–alanine 29, phenylalanine 77–phenylalanine 97, leucine 116–glycine 136, isoleucine 156–leucine 176, leucine 188–leucine 208, isoleucine 236–methionine 256, isoleucine 275–isoleucine 295, and valine 315–isoleucine 335.

Belongs to the complex I subunit 1 family. In terms of assembly, NDH-1 is composed of 14 different subunits. Subunits NuoA, H, J, K, L, M, N constitute the membrane sector of the complex.

The protein localises to the cell inner membrane. It carries out the reaction a quinone + NADH + 5 H(+)(in) = a quinol + NAD(+) + 4 H(+)(out). In terms of biological role, NDH-1 shuttles electrons from NADH, via FMN and iron-sulfur (Fe-S) centers, to quinones in the respiratory chain. The immediate electron acceptor for the enzyme in this species is believed to be ubiquinone. Couples the redox reaction to proton translocation (for every two electrons transferred, four hydrogen ions are translocated across the cytoplasmic membrane), and thus conserves the redox energy in a proton gradient. This subunit may bind ubiquinone. The protein is NADH-quinone oxidoreductase subunit H of Neorickettsia sennetsu (strain ATCC VR-367 / Miyayama) (Ehrlichia sennetsu).